The primary structure comprises 628 residues: Pinene synthase, chloroplastic (628 aa).

The N-terminal 36 residues, 1–36 (MALVSTAPLASKSCLHKSLISSTHELKALSRTIPAL), are a transit peptide targeting the chloroplast. Mg(2+)-binding residues include Asp-379, Asp-383, and Asp-531. A DDXXD motif motif is present at residues 379-383 (DDMYD).

The protein belongs to the terpene synthase family. Tpsd subfamily. Mg(2+) is required as a cofactor. It depends on Mn(2+) as a cofactor. K(+) serves as cofactor.

It is found in the plastid. The protein resides in the chloroplast. It catalyses the reaction (2E)-geranyl diphosphate = (1S,5S)-alpha-pinene + diphosphate. The enzyme catalyses (2E)-geranyl diphosphate = (1S,5S)-beta-pinene + diphosphate. Its pathway is terpene metabolism; oleoresin biosynthesis. Involved in defensive oleoresin formation in conifers in response to insect attack or other injury. Involved in monoterpene (C10) olefins biosynthesis. A mixture of alpha- and beta-pinene is produced by this enzyme. This is Pinene synthase, chloroplastic (ag3) from Abies grandis (Grand fir).